Reading from the N-terminus, the 490-residue chain is ATP synthase subunit beta (490 aa).

Residue 173–180 (GGAGVGKT) participates in ATP binding.

This sequence belongs to the ATPase alpha/beta chains family. F-type ATPases have 2 components, CF(1) - the catalytic core - and CF(0) - the membrane proton channel. CF(1) has five subunits: alpha(3), beta(3), gamma(1), delta(1), epsilon(1). CF(0) has three main subunits: a(1), b(2) and c(9-12). The alpha and beta chains form an alternating ring which encloses part of the gamma chain. CF(1) is attached to CF(0) by a central stalk formed by the gamma and epsilon chains, while a peripheral stalk is formed by the delta and b chains.

It is found in the cell membrane. The enzyme catalyses ATP + H2O + 4 H(+)(in) = ADP + phosphate + 5 H(+)(out). In terms of biological role, produces ATP from ADP in the presence of a proton gradient across the membrane. The catalytic sites are hosted primarily by the beta subunits. The chain is ATP synthase subunit beta from Bifidobacterium longum subsp. infantis (strain ATCC 15697 / DSM 20088 / JCM 1222 / NCTC 11817 / S12).